Here is a 426-residue protein sequence, read N- to C-terminus: Glutamyl-tRNA reductase (426 aa).

Substrate is bound by residues 51-54 (TCNR), S110, 115-117 (EAQ), and Q121. Catalysis depends on C52, which acts as the Nucleophile. 190 to 195 (GAGEMA) provides a ligand contact to NADP(+).

Belongs to the glutamyl-tRNA reductase family. In terms of assembly, homodimer.

The catalysed reaction is (S)-4-amino-5-oxopentanoate + tRNA(Glu) + NADP(+) = L-glutamyl-tRNA(Glu) + NADPH + H(+). It participates in porphyrin-containing compound metabolism; protoporphyrin-IX biosynthesis; 5-aminolevulinate from L-glutamyl-tRNA(Glu): step 1/2. Its function is as follows. Catalyzes the NADPH-dependent reduction of glutamyl-tRNA(Glu) to glutamate 1-semialdehyde (GSA). The sequence is that of Glutamyl-tRNA reductase from Desulfotalea psychrophila (strain LSv54 / DSM 12343).